We begin with the raw amino-acid sequence, 1022 residues long: Polyamine-modulated factor 1-binding protein 1 (1022 aa).

Coiled-coil stretches lie at residues 89–121 (NKQYHLRQLQQLKKKLLTLQQELEFRTQELQAS), 169–281 (EKLH…ACSN), 312–377 (SEDC…LREE), 411–732 (LKKD…SAIQ), and 758–968 (QDDL…KAGN). Composition is skewed to basic and acidic residues over residues 545–556 (QKESSKIEEERK) and 571–582 (EGQRRLSNAEKE). The disordered stretch occupies residues 545–582 (QKESSKIEEERKHNRQRLQELSSELSEGQRRLSNAEKE).

As to expression, expressed in the testis.

The protein localises to the cell projection. It is found in the cilium. The protein resides in the flagellum. Required for normal spermatogenesis. It functions as a scaffold protein that attaches the sperm head-tail connecting piece to the nuclear envelope, thus maintaining sperm head and tail integrity. May also be involved in the general organization of cellular cytoskeleton. The protein is Polyamine-modulated factor 1-binding protein 1 (Pmfbp1) of Mus musculus (Mouse).